Here is a 64-residue protein sequence, read N- to C-terminus: Large ribosomal subunit protein bL33 (64 aa).

Belongs to the bacterial ribosomal protein bL33 family.

The sequence is that of Large ribosomal subunit protein bL33 from Prochlorococcus marinus (strain MIT 9313).